The primary structure comprises 823 residues: Trimethylamine-N-oxide reductase (823 aa).

Residues 1–32 (MKQSRRQFLKNMSAMAATFAMPNFLIAQNAFA) constitute a signal peptide (tat-type signal). Serine 181 contributes to the Mo-bis(molybdopterin guanine dinucleotide) binding site.

Belongs to the prokaryotic molybdopterin-containing oxidoreductase family. Mo-bis(molybdopterin guanine dinucleotide) is required as a cofactor. In terms of processing, predicted to be exported by the Tat system. The position of the signal peptide cleavage has not been experimentally proven.

Its subcellular location is the periplasm. It carries out the reaction trimethylamine + 2 Fe(III)-[cytochrome c] + H2O = trimethylamine N-oxide + 2 Fe(II)-[cytochrome c] + 3 H(+). In terms of biological role, reduces trimethylamine-N-oxide (TMAO) into trimethylamine; an anaerobic reaction coupled to energy-yielding reactions. The polypeptide is Trimethylamine-N-oxide reductase (torA) (Pasteurella multocida (strain Pm70)).